The sequence spans 475 residues: Ribulose bisphosphate carboxylase large chain (475 aa).

Positions 1–2 (MS) are excised as a propeptide. P3 carries the post-translational modification N-acetylproline. Residue K14 is modified to N6,N6,N6-trimethyllysine. Substrate is bound by residues N123 and T173. The active-site Proton acceptor is K175. K177 provides a ligand contact to substrate. Residues K201, D203, and E204 each coordinate Mg(2+). K201 is modified (N6-carboxylysine). Catalysis depends on H294, which acts as the Proton acceptor. Residues R295, H327, and S379 each contribute to the substrate site.

It belongs to the RuBisCO large chain family. Type I subfamily. In terms of assembly, heterohexadecamer of 8 large chains and 8 small chains; disulfide-linked. The disulfide link is formed within the large subunit homodimers. It depends on Mg(2+) as a cofactor. In terms of processing, the disulfide bond which can form in the large chain dimeric partners within the hexadecamer appears to be associated with oxidative stress and protein turnover.

It localises to the plastid. It is found in the chloroplast. It carries out the reaction 2 (2R)-3-phosphoglycerate + 2 H(+) = D-ribulose 1,5-bisphosphate + CO2 + H2O. It catalyses the reaction D-ribulose 1,5-bisphosphate + O2 = 2-phosphoglycolate + (2R)-3-phosphoglycerate + 2 H(+). Its function is as follows. RuBisCO catalyzes two reactions: the carboxylation of D-ribulose 1,5-bisphosphate, the primary event in carbon dioxide fixation, as well as the oxidative fragmentation of the pentose substrate in the photorespiration process. Both reactions occur simultaneously and in competition at the same active site. This is Ribulose bisphosphate carboxylase large chain from Angiopteris lygodiifolia (Turnip fern).